Reading from the N-terminus, the 303-residue chain is Pantothenate synthetase (303 aa).

A disordered region spans residues 1–21 (MIATGHGGAERRTTAGDGTAR). 48 to 55 (MGALHDGH) contacts ATP. Histidine 55 functions as the Proton donor in the catalytic mechanism. Residue glutamine 79 participates in (R)-pantoate binding. Glutamine 79 provides a ligand contact to beta-alanine. 165-168 (GRKD) contributes to the ATP binding site. (R)-pantoate is bound at residue glutamine 171. 202-205 (ASSR) contacts ATP.

The protein belongs to the pantothenate synthetase family. As to quaternary structure, homodimer.

The protein resides in the cytoplasm. The catalysed reaction is (R)-pantoate + beta-alanine + ATP = (R)-pantothenate + AMP + diphosphate + H(+). Its pathway is cofactor biosynthesis; (R)-pantothenate biosynthesis; (R)-pantothenate from (R)-pantoate and beta-alanine: step 1/1. Its function is as follows. Catalyzes the condensation of pantoate with beta-alanine in an ATP-dependent reaction via a pantoyl-adenylate intermediate. The polypeptide is Pantothenate synthetase (Acidothermus cellulolyticus (strain ATCC 43068 / DSM 8971 / 11B)).